We begin with the raw amino-acid sequence, 314 residues long: Ribosomal RNA small subunit methyltransferase H (314 aa).

S-adenosyl-L-methionine contacts are provided by residues 32–34 (GGH), aspartate 52, phenylalanine 79, aspartate 100, and glutamine 107.

This sequence belongs to the methyltransferase superfamily. RsmH family.

The protein resides in the cytoplasm. It carries out the reaction cytidine(1402) in 16S rRNA + S-adenosyl-L-methionine = N(4)-methylcytidine(1402) in 16S rRNA + S-adenosyl-L-homocysteine + H(+). Specifically methylates the N4 position of cytidine in position 1402 (C1402) of 16S rRNA. This chain is Ribosomal RNA small subunit methyltransferase H, found in Shouchella clausii (strain KSM-K16) (Alkalihalobacillus clausii).